A 327-amino-acid polypeptide reads, in one-letter code: MEISMTSHINNAVETFRLEIETLEKLKNSIDENFEKACEIILENNRDKSRVIITGMGKSGHIGKKMAATFASTGTPAFFVHPGEAGHGDFGMITKNDVLIAISNSGTSSEIMGLLPMIKHLDIPIIAITSNPKSILARNSNVTLNLHVDKEACPLNLAPTSSTTATLVLGDALAIALLKAKNFSEKDFAFSHPNGALGRKLILKVENIMRKGNEIPIVKPTDNIRKAILEISDKGVGNTLVAENNTLLGIFTDGDLRRMFEAESFNSQRAISEVMTKNPKSISKEEMAITALEKMEKYEITSLAVVDNGHNILGIVTMHDLIKLELR.

Positions 41–183 constitute an SIS domain; it reads ILENNRDKSR…AIALLKAKNF (143 aa). Residues 74–75, His81, His87, 113–122, 147–149, Thr221, and Glu273 contribute to the substrate site; these read GT, GLLPMIKHLD, and HVD. Residue His81 coordinates Zn(2+). Positions 209-268 constitute a CBS 1 domain; sequence MRKGNEIPIVKPTDNIRKAILEISDKGVGNTLVAENNTLLGIFTDGDLRRMFEAESFNSQ. The CBS 2 domain occupies 275–327; sequence MTKNPKSISKEEMAITALEKMEKYEITSLAVVDNGHNILGIVTMHDLIKLELR.

The protein belongs to the SIS family. GutQ/KpsF subfamily. As to quaternary structure, homotetramer.

The catalysed reaction is D-arabinose 5-phosphate = D-ribulose 5-phosphate. The protein operates within carbohydrate biosynthesis; 3-deoxy-D-manno-octulosonate biosynthesis; 3-deoxy-D-manno-octulosonate from D-ribulose 5-phosphate: step 1/3. It functions in the pathway bacterial outer membrane biogenesis; lipopolysaccharide biosynthesis. Inhibited by hydroxamates, mimicking the putative enediol reaction intermediate. Most potent inhibition, with an IC(50) of 0.7 uM, is obtained with the 4 carbon-based hydroxamate containing acetyl moieties. In terms of biological role, involved in the biosynthesis of 3-deoxy-D-manno-octulosonate (KDO), a unique 8-carbon sugar component of lipopolysaccharides (LPSs). Catalyzes the reversible aldol-ketol isomerization between D-ribulose 5-phosphate (Ru5P) and D-arabinose 5-phosphate (A5P). This is Arabinose 5-phosphate isomerase KdsD (kdsD) from Francisella tularensis subsp. tularensis (strain SCHU S4 / Schu 4).